The sequence spans 131 residues: Arsenate reductase (131 aa).

Active-site nucleophile residues include Cys10, Cys82, and Cys89. 2 cysteine pairs are disulfide-bonded: Cys10-Cys82 and Cys82-Cys89.

Belongs to the low molecular weight phosphotyrosine protein phosphatase family. Thioredoxin-coupled ArsC subfamily.

The protein localises to the cytoplasm. It carries out the reaction arsenate + [thioredoxin]-dithiol + H(+) = arsenite + [thioredoxin]-disulfide + H2O. In terms of biological role, catalyzes the reduction of arsenate [As(V)] to arsenite [As(III)]. The protein is Arsenate reductase of Staphylococcus aureus (strain COL).